Consider the following 327-residue polypeptide: Acetyl-coenzyme A carboxylase carboxyl transferase subunit beta (327 aa).

In terms of domain architecture, CoA carboxyltransferase N-terminal spans 24 to 293 (LWIKCPDTGQ…LTVTTAVEAP (270 aa)). The segment covering 293 to 311 (PAEAAAKAEPEATTTEQPG) has biased composition (low complexity). The segment at 293–327 (PAEAAAKAEPEATTTEQPGAPAPTEPPAQPAAPQA) is disordered. Over residues 312 to 327 (APAPTEPPAQPAAPQA) the composition is skewed to pro residues.

It belongs to the AccD/PCCB family. In terms of assembly, acetyl-CoA carboxylase is a heterohexamer composed of biotin carboxyl carrier protein (AccB), biotin carboxylase (AccC) and two subunits each of ACCase subunit alpha (AccA) and ACCase subunit beta (AccD).

It is found in the cytoplasm. The catalysed reaction is N(6)-carboxybiotinyl-L-lysyl-[protein] + acetyl-CoA = N(6)-biotinyl-L-lysyl-[protein] + malonyl-CoA. It participates in lipid metabolism; malonyl-CoA biosynthesis; malonyl-CoA from acetyl-CoA: step 1/1. In terms of biological role, component of the acetyl coenzyme A carboxylase (ACC) complex. Biotin carboxylase (BC) catalyzes the carboxylation of biotin on its carrier protein (BCCP) and then the CO(2) group is transferred by the transcarboxylase to acetyl-CoA to form malonyl-CoA. The sequence is that of Acetyl-coenzyme A carboxylase carboxyl transferase subunit beta from Rhodopseudomonas palustris (strain ATCC BAA-98 / CGA009).